A 572-amino-acid chain; its full sequence is Probable pyruvate decarboxylase C186.09 (572 aa).

The substrate site is built by Asp-38 and His-125. A thiamine pyrophosphate binding region spans residues 400-482 (DSWFGGMRIT…FLINNRGYTI (83 aa)). Mg(2+) contacts are provided by Asp-450, Asn-477, and Gly-479. Glu-483 lines the substrate pocket.

This sequence belongs to the TPP enzyme family. As to quaternary structure, homotetramer. Requires a metal cation as cofactor. Thiamine diphosphate serves as cofactor.

It catalyses the reaction a 2-oxocarboxylate + H(+) = an aldehyde + CO2. The polypeptide is Probable pyruvate decarboxylase C186.09 (Schizosaccharomyces pombe (strain 972 / ATCC 24843) (Fission yeast)).